The following is a 989-amino-acid chain: Zinc finger SWIM domain-containing protein 4 (989 aa).

The tract at residues 1 to 32 is disordered; it reads MEPPAAKRSRGCPAGPEERDAGAGAARGRGRP. The SWIM-type zinc finger occupies 139–176; it reads YHVSISFDRCKITSVSCGCDNRDLFYCAHVVALSLYRI.

This chain is Zinc finger SWIM domain-containing protein 4 (ZSWIM4), found in Homo sapiens (Human).